A 607-amino-acid chain; its full sequence is Ceramide kinase (607 aa).

Positions 135-358 (DRPKSLMVFV…LDIAQVVRWK (224 aa)) constitute a DAGKc domain. Residues 145-149 (HPLCG), Thr176, and 205-211 (GDGLFNE) contribute to the ATP site. Substrate is bound at residue 204-207 (GGDG). Asp206 serves as the catalytic Proton donor/acceptor. Positions 247–297 (NDLSNSELTGDDANAISGSSNTPDDHEPLLSTTRSTGLDISSSDSSDEPCN) are disordered. The segment covering 276–286 (LSTTRSTGLDI) has biased composition (polar residues). Ser320 is an ATP binding site. The CXXXCXXC signature appears at 454–461 (CRTNCLIC).

The cofactor is Ca(2+). Requires Mg(2+) as cofactor. As to expression, highly expressed in leaves and at lower levels in stems.

The enzyme catalyses an N-acylsphing-4-enine + ATP = an N-acylsphing-4-enine 1-phosphate + ADP + H(+). Catalyzes specifically the phosphorylation of ceramide to form ceramide 1-phosphate. Possesses activity on ceramide analog (C6 synthetic ceramide) in vitro. Ceramide is a critical sphingolipid metabolite that induces programmed cell death (PCD) in plants and ceramide-1-phosphate has a PCD suppressive effect. Thus, ceramide phosphorylation plays a role in the modulation of PCD and CERK activity is crucial for the maintenance of cell viability. The polypeptide is Ceramide kinase (CERK) (Oryza sativa subsp. japonica (Rice)).